Reading from the N-terminus, the 172-residue chain is RTX-I toxin-activating lysine-acyltransferase ApxIC (172 aa).

Catalysis depends on residues histidine 24 and aspartate 93.

This sequence belongs to the RTX toxin acyltransferase family. Homodimer.

Its subcellular location is the cytoplasm. It carries out the reaction a fatty acyl-[ACP] + L-lysyl-[protein] = N(6)-(fatty acyl)-L-lysyl-[protein] + holo-[ACP] + H(+). Functionally, protein-lysine acyltransferase that catalyzes fatty acylation of the protoxin, thereby converting it to the active toxin. This Actinobacillus pleuropneumoniae (Haemophilus pleuropneumoniae) protein is RTX-I toxin-activating lysine-acyltransferase ApxIC.